The primary structure comprises 238 residues: Zinc import ATP-binding protein ZnuC (238 aa).

The 216-residue stretch at 5-220 (VKLKNVCVNL…LEFISIFGLK (216 aa)) folds into the ABC transporter domain. 37–44 (GPNGAGKS) serves as a coordination point for ATP.

This sequence belongs to the ABC transporter superfamily. Zinc importer (TC 3.A.1.15.5) family. The complex is composed of two ATP-binding proteins (ZnuC), two transmembrane proteins (ZnuB) and a solute-binding protein (ZnuA).

The protein localises to the cell inner membrane. It carries out the reaction Zn(2+)(out) + ATP(in) + H2O(in) = Zn(2+)(in) + ADP(in) + phosphate(in) + H(+)(in). In terms of biological role, part of the ABC transporter complex ZnuABC involved in zinc import. Responsible for energy coupling to the transport system. This is Zinc import ATP-binding protein ZnuC from Buchnera aphidicola subsp. Acyrthosiphon pisum (strain APS) (Acyrthosiphon pisum symbiotic bacterium).